The primary structure comprises 450 residues: Glutamate--tRNA ligase 1 (450 aa).

Residues 7 to 17 carry the 'HIGH' region motif; sequence PSPTGYMHVGN. Positions 236-240 match the 'KMSKS' region motif; sequence KISKR. Position 239 (Lys-239) interacts with ATP.

This sequence belongs to the class-I aminoacyl-tRNA synthetase family. Glutamate--tRNA ligase type 1 subfamily. In terms of assembly, monomer.

It is found in the cytoplasm. The enzyme catalyses tRNA(Glu) + L-glutamate + ATP = L-glutamyl-tRNA(Glu) + AMP + diphosphate. Its function is as follows. Catalyzes the attachment of glutamate to tRNA(Glu) in a two-step reaction: glutamate is first activated by ATP to form Glu-AMP and then transferred to the acceptor end of tRNA(Glu). This Anaplasma phagocytophilum (strain HZ) protein is Glutamate--tRNA ligase 1.